We begin with the raw amino-acid sequence, 95 residues long: Signal recognition particle 19 kDa protein (95 aa).

It belongs to the SRP19 family. As to quaternary structure, part of the signal recognition particle protein translocation system, which is composed of SRP and FtsY. Archaeal SRP consists of a 7S RNA molecule of 300 nucleotides and two protein subunits: SRP54 and SRP19.

Its subcellular location is the cytoplasm. Its function is as follows. Involved in targeting and insertion of nascent membrane proteins into the cytoplasmic membrane. Binds directly to 7S RNA and mediates binding of the 54 kDa subunit of the SRP. In Desulfurococcus amylolyticus (strain DSM 18924 / JCM 16383 / VKM B-2413 / 1221n) (Desulfurococcus kamchatkensis), this protein is Signal recognition particle 19 kDa protein.